Here is a 416-residue protein sequence, read N- to C-terminus: Polyadenylation and cleavage factor homolog 1 (416 aa).

Polar residues predominate over residues 1 to 17 (MASNGSFSAQRNANART). The disordered stretch occupies residues 1–80 (MASNGSFSAQ…NNNNVSRVSS (80 aa)). Residues 70–80 (SNNNNVSRVSS) show a composition bias toward low complexity. Residues 199 to 220 (KELTDLLSLLNNEKEKKTLEAS) adopt a coiled-coil conformation. The C2H2-type zinc finger occupies 254–276 (RQCSSCGLRFKCQEEHSKHMDWH).

Forms a complex with cleavage and polyadenylation specificity factor (CPSF) subunits CLPS3, CLPS5, CPSF30, PCFS4, PCFS5, CSTF77 and FIPS3.

The protein localises to the nucleus. This is Polyadenylation and cleavage factor homolog 1 from Arabidopsis thaliana (Mouse-ear cress).